Here is a 236-residue protein sequence, read N- to C-terminus: Cysteine-rich venom protein TRI1 (236 aa).

The first 18 residues, 1 to 18, serve as a signal peptide directing secretion; it reads MIVFILLSLAAVLEQSFG. The SCP domain occupies 37–165; sequence VDRHNSFRRS…GYSYFYVCQY (129 aa). Cystine bridges form between Cys-74–Cys-152, Cys-91–Cys-166, Cys-147–Cys-163, Cys-185–Cys-192, Cys-188–Cys-197, Cys-201–Cys-234, Cys-210–Cys-228, and Cys-219–Cys-232. The region spanning 201-234 is the ShKT domain; the sequence is CLREDKFTNCKSLVQQNSCQHDWTRKNCPATCFC.

The protein belongs to the CRISP family. Expressed by the venom gland.

The protein resides in the secreted. In terms of biological role, blocks contraction of smooth muscle elicited by high potassium-induced depolarization, but does not block caffeine-stimulated contraction. May target voltage-gated calcium channels on smooth muscle. The protein is Cysteine-rich venom protein TRI1 of Trimorphodon biscutatus (Western lyre snake).